Reading from the N-terminus, the 458-residue chain is Bifunctional protein GlmU (458 aa).

The pyrophosphorylase stretch occupies residues 1-229; sequence MNKFAIVLAA…FDESLGVNDR (229 aa). Residues 8–11, K22, Q72, and 77–78 each bind UDP-N-acetyl-alpha-D-glucosamine; these read LAAG and GT. Mg(2+) is bound at residue D102. Positions 139, 154, 169, and 227 each coordinate UDP-N-acetyl-alpha-D-glucosamine. N227 is a binding site for Mg(2+). Residues 230 to 250 are linker; sequence VALSQAEATMRKRINHEHMVN. The interval 251 to 458 is N-acetyltransferase; the sequence is GVTLIDPATT…AKKMPHYRGQ (208 aa). 2 residues coordinate UDP-N-acetyl-alpha-D-glucosamine: R332 and K350. Residue H362 is the Proton acceptor of the active site. Residues Y365 and N376 each coordinate UDP-N-acetyl-alpha-D-glucosamine. Positions 379, 404, 422, and 439 each coordinate acetyl-CoA.

It in the N-terminal section; belongs to the N-acetylglucosamine-1-phosphate uridyltransferase family. The protein in the C-terminal section; belongs to the transferase hexapeptide repeat family. In terms of assembly, homotrimer. Requires Mg(2+) as cofactor.

It localises to the cytoplasm. It carries out the reaction alpha-D-glucosamine 1-phosphate + acetyl-CoA = N-acetyl-alpha-D-glucosamine 1-phosphate + CoA + H(+). The enzyme catalyses N-acetyl-alpha-D-glucosamine 1-phosphate + UTP + H(+) = UDP-N-acetyl-alpha-D-glucosamine + diphosphate. The protein operates within nucleotide-sugar biosynthesis; UDP-N-acetyl-alpha-D-glucosamine biosynthesis; N-acetyl-alpha-D-glucosamine 1-phosphate from alpha-D-glucosamine 6-phosphate (route II): step 2/2. It participates in nucleotide-sugar biosynthesis; UDP-N-acetyl-alpha-D-glucosamine biosynthesis; UDP-N-acetyl-alpha-D-glucosamine from N-acetyl-alpha-D-glucosamine 1-phosphate: step 1/1. Its pathway is bacterial outer membrane biogenesis; LPS lipid A biosynthesis. Its function is as follows. Catalyzes the last two sequential reactions in the de novo biosynthetic pathway for UDP-N-acetylglucosamine (UDP-GlcNAc). The C-terminal domain catalyzes the transfer of acetyl group from acetyl coenzyme A to glucosamine-1-phosphate (GlcN-1-P) to produce N-acetylglucosamine-1-phosphate (GlcNAc-1-P), which is converted into UDP-GlcNAc by the transfer of uridine 5-monophosphate (from uridine 5-triphosphate), a reaction catalyzed by the N-terminal domain. This chain is Bifunctional protein GlmU, found in Lactococcus lactis subsp. cremoris (strain MG1363).